We begin with the raw amino-acid sequence, 242 residues long: 2-amino-5-formylamino-6-ribosylaminopyrimidin-4(3H)-one 5'-monophosphate deformylase (242 aa).

4 residues coordinate Fe cation: glutamate 46, histidine 48, aspartate 57, and histidine 125.

The protein belongs to the creatininase superfamily. FAPy deformylase family. Homodimer. It depends on Fe(2+) as a cofactor. Requires Zn(2+) as cofactor.

The catalysed reaction is 2-amino-5-formylamino-6-(5-phospho-D-ribosylamino)pyrimidin-4(3H)-one + H2O = 2,5-diamino-6-(1-D-ribosylamino)pyrimidin-4(3H)-one 5'-phosphate + formate + H(+). It functions in the pathway cofactor biosynthesis; coenzyme F420 biosynthesis. It participates in cofactor biosynthesis; riboflavin biosynthesis. Functionally, catalyzes the hydrolysis of the formamide of 2-amino-5-formylamino-6-ribosylamino-4(3H)-pyrimidinone 5'-monophosphate (FAPy) to form 2,5-diamino-6-ribosylamino-4(3H)-pyrimidinone 5'-phosphate (APy). The chain is 2-amino-5-formylamino-6-ribosylaminopyrimidin-4(3H)-one 5'-monophosphate deformylase from Methanococcus aeolicus (strain ATCC BAA-1280 / DSM 17508 / OCM 812 / Nankai-3).